A 216-amino-acid chain; its full sequence is Dimethylamine corrinoid protein 2 (216 aa).

A B12-binding N-terminal domain is found at 1–91; the sequence is MASKEELLQE…EMPAGTETKK (91 aa). One can recognise a B12-binding domain in the interval 92–216; the sequence is LGVIVNGTVE…AKAKELLLGK (125 aa). His-105 is a methylcob(III)alamin binding site.

It belongs to the methylamine corrinoid protein family.

It functions in the pathway one-carbon metabolism; methanogenesis from dimethylamine. Acts as a methyl group carrier between MtbB and MtbA. This chain is Dimethylamine corrinoid protein 2 (mtbC2), found in Methanosarcina acetivorans (strain ATCC 35395 / DSM 2834 / JCM 12185 / C2A).